A 162-amino-acid chain; its full sequence is Interleukin-15 (162 aa).

The signal sequence occupies residues 1-29 (MRISKPHLRSVSIQCYLCLLLNSHFLTEA). The propeptide occupies 30–48 (GIHVFILGCFSAGLPKTEA). 2 disulfide bridges follow: C83-C133 and C90-C136. N-linked (GlcNAc...) asparagine glycosylation is present at N127.

Belongs to the IL-15/IL-21 family.

It localises to the secreted. Its function is as follows. Cytokine that plays a major role in the development of inflammatory and protective immune responses to microbial invaders and parasites by modulating immune cells of both the innate and adaptive immune systems. Stimulates the proliferation of natural killer cells, T-cells and B-cells and promotes the secretion of several cytokines. In monocytes, induces the production of IL8 and monocyte chemotactic protein 1/CCL2, two chemokines that attract neutrophils and monocytes respectively to sites of infection. Unlike most cytokines, which are secreted in soluble form, IL15 is expressed in association with its high affinity IL15RA on the surface of IL15-producing cells and delivers signals to target cells that express IL2RB and IL2RG receptor subunits. Binding to its receptor triggers the phosphorylation of JAK1 and JAK3 and the recruitment and subsequent phosphorylation of signal transducer and activator of transcription-3/STAT3 and STAT5. In mast cells, induces the rapid tyrosine phosphorylation of STAT6 and thereby controls mast cell survival and release of cytokines such as IL4. The sequence is that of Interleukin-15 (IL15) from Macaca mulatta (Rhesus macaque).